The primary structure comprises 253 residues: Sulfate transporter CysZ (253 aa).

4 helical membrane-spanning segments follow: residues 31 to 51 (FVIL…WWLF), 75 to 95 (LLWP…FSTI), 151 to 171 (IVLL…PVLW), and 222 to 242 (IPLL…AMWV).

It belongs to the CysZ family.

The protein resides in the cell inner membrane. In terms of biological role, high affinity, high specificity proton-dependent sulfate transporter, which mediates sulfate uptake. Provides the sulfur source for the cysteine synthesis pathway. This is Sulfate transporter CysZ from Shigella flexneri serotype 5b (strain 8401).